The chain runs to 478 residues: MGPTRVPRRTVLFQRERTGLTYRVPALLCVPPRPTLLAFAEQRLSPDDSHAHRLVLRRGTLTRGSVRWGTLSVLETAVLEEHRSMNPCPVLDEHSGTIFLFFIAVLGHTPEAVQIATGKNAARLCCVTSCDAGLTWGSVRDLTEEAIGAALQDWATFAVGPGHGVQLRSGRLLVPAYTYHVDRRECFGKICWTSPHSLAFYSDDHGISWHCGGLVPNLRSGECQLAAVDGDFLYCNARSPLGNRVQALSADEGTSFLPGELVPTLAETARGCQGSIVGFLAPPSIEPQDDRWTGSPRNTPHSPCFNLRVQESSGEGARGLLERWMPRLPLCYPQSRSPENHGLEPGSDGDKTSWTPECPMSSDSMLQSPTWLLYSHPAGRRARLHMGIYLSRSPLDPHSWTEPWVIYEGPSGYSDLAFLGPMPGASLVFACLFESGTRTSYEDISFCLFSLADVLENVPTGLEMLSLRDKAQGHCWPS.

An FRIP motif motif is present at residues 22-25 (YRVP). Substrate contacts are provided by Arg-23 and Arg-43. Residues Asp-47 and Asp-48 each act as proton acceptor in the active site. A BNR 1 repeat occupies 127–138 (VTSCDAGLTWGS). Residues Tyr-177 and Tyr-179 each contribute to the substrate site. A BNR 2 repeat occupies 200 to 211 (FYSDDHGISWHC). Substrate-binding residues include Glu-222 and Arg-238. One copy of the BNR 3 repeat lies at 247 to 258 (ALSADEGTSFLP). 2 disordered regions span residues 285-307 (IEPQ…CFNL) and 335-359 (SRSP…PECP). Arg-383 lines the substrate pocket. The active-site Nucleophile is the Tyr-413. Glu-434 is a catalytic residue.

The protein belongs to the glycosyl hydrolase 33 family. Highly expressed in brain, particularly in hippocampus, and at lower levels in liver and spleen. Expressed in hippocampal neurons (at protein level).

Its subcellular location is the cell membrane. It is found in the endoplasmic reticulum membrane. The protein localises to the microsome membrane. It localises to the mitochondrion inner membrane. The protein resides in the mitochondrion outer membrane. Its subcellular location is the cell projection. It is found in the neuron projection. The protein localises to the lysosome lumen. The enzyme catalyses Hydrolysis of alpha-(2-&gt;3)-, alpha-(2-&gt;6)-, alpha-(2-&gt;8)- glycosidic linkages of terminal sialic acid residues in oligosaccharides, glycoproteins, glycolipids, colominic acid and synthetic substrates.. The catalysed reaction is a ganglioside GM3 + H2O = a beta-D-galactosyl-(1-&gt;4)-beta-D-glucosyl-(1&lt;-&gt;1)-ceramide + N-acetylneuraminate. It catalyses the reaction a ganglioside GM3 (d18:1(4E)) + H2O = a beta-D-Gal-(1-&gt;4)-beta-D-Glc-(1&lt;-&gt;1)-Cer(d18:1(4E)) + N-acetylneuraminate. It carries out the reaction a ganglioside GM2 + H2O = a ganglioside GA2 + N-acetylneuraminate. The enzyme catalyses a ganglioside GM2 (d18:1(4E)) + H2O = a ganglioside GA2 (d18:1(4E)) + N-acetylneuraminate. The catalysed reaction is a ganglioside GD1a + H2O = a ganglioside GM1 + N-acetylneuraminate. It catalyses the reaction a ganglioside GD1a (d18:1(4E)) + H2O = a ganglioside GM1 (d18:1(4E)) + N-acetylneuraminate. It carries out the reaction a ganglioside GD3 + H2O = a ganglioside GM3 + N-acetylneuraminate. The enzyme catalyses a ganglioside GD3 (d18:1(4E)) + H2O = a ganglioside GM3 (d18:1(4E)) + N-acetylneuraminate. Its function is as follows. Exo-alpha-sialidase that catalyzes the hydrolytic cleavage of the terminal sialic acid (N-acetylneuraminic acid, Neu5Ac) of a glycan moiety in the catabolism of glycolipids, glycoproteins and oligosacharides. Efficiently hydrolyzes gangliosides including alpha-(2-&gt;3)-sialylated GD1a and GM3 and alpha-(2-&gt;8)-sialylated GD3. Hydrolyzes poly-alpha-(2-&gt;8)-sialylated neural cell adhesion molecule NCAM1 likely at growth cones, suppressing neurite outgrowth in hippocampal neurons. May desialylate sialyl Lewis A and X antigens at the cell surface, down-regulating these glycan epitopes recognized by SELE/E selectin in the initiation of cell adhesion and extravasation. Has sialidase activity toward mucin, fetuin and sialyllactose. The sequence is that of Sialidase-4 (Neu4) from Mus musculus (Mouse).